A 133-amino-acid chain; its full sequence is Covalently-linked cell wall protein 12 (133 aa).

A signal peptide spans 1 to 18 (MQFSTVASIAAVAAVASA). Asn21 carries an N-linked (GlcNAc...) asparagine glycan. Residues Thr23, Thr24, and Thr26 are each glycosylated (O-linked (Man) threonine). Ser28 and Ser31 each carry an O-linked (Man) serine glycan. O-linked (Man) threonine glycosylation is found at Thr32, Thr33, Thr36, and Thr38. Ser39 and Ser46 each carry an O-linked (Man) serine glycan. Thr48 is a glycosylation site (O-linked (Man) threonine). Tandem repeats lie at residues 75-88 (TTEA…TAAP) and 91-103 (STEA…SAAP). Positions 79–104 (PKNGTSTAAPVTSTEAPKNTTSAAPT) are disordered. A Glycyl lysine isopeptide (Lys-Gly) (interchain with G-Cter in ubiquitin) cross-link involves residue Lys80. Asn81 and Asn97 each carry an N-linked (GlcNAc...) asparagine glycan. Residues 81–104 (NGTSTAAPVTSTEAPKNTTSAAPT) show a composition bias toward polar residues. Residue Gly112 is the site of GPI-anchor amidated glycine attachment. A propeptide spans 113 to 133 (AAAKALPAAGALLAGAAALLL) (removed in mature form).

To yeast protein YDR134C. Extensively O-glycosylated; glycans consist probably of single mannose residues. N-glycosylated. Post-translationally, the GPI-anchor is attached to the protein in the endoplasmic reticulum and serves to target the protein to the cell surface. There, the glucosamine-inositol phospholipid moiety is cleaved off and the GPI-modified mannoprotein is covalently attached via its lipidless GPI glycan remnant to the 1,6-beta-glucan of the outer cell wall layer.

The protein localises to the secreted. The protein resides in the cell wall. Its subcellular location is the membrane. Functionally, component of the cell wall. May play a role in the formation of a tightly packed outer mannan layer, which protects the inner glucan. The chain is Covalently-linked cell wall protein 12 (CCW12) from Saccharomyces cerevisiae (strain ATCC 204508 / S288c) (Baker's yeast).